The sequence spans 540 residues: Chaperonin GroEL (540 aa).

ATP is bound by residues 29 to 32 (TIGP), 86 to 90 (DGTTT), glycine 413, 476 to 478 (NAA), and aspartate 492.

The protein belongs to the chaperonin (HSP60) family. As to quaternary structure, forms a cylinder of 14 subunits composed of two heptameric rings stacked back-to-back. Interacts with the co-chaperonin GroES.

Its subcellular location is the cytoplasm. The catalysed reaction is ATP + H2O + a folded polypeptide = ADP + phosphate + an unfolded polypeptide.. Its function is as follows. Together with its co-chaperonin GroES, plays an essential role in assisting protein folding. The GroEL-GroES system forms a nano-cage that allows encapsulation of the non-native substrate proteins and provides a physical environment optimized to promote and accelerate protein folding. This chain is Chaperonin GroEL, found in Staphylococcus carnosus (strain TM300).